A 154-amino-acid polypeptide reads, in one-letter code: Large ribosomal subunit protein uL13 (154 aa).

The protein belongs to the universal ribosomal protein uL13 family. In terms of assembly, part of the 50S ribosomal subunit.

This protein is one of the early assembly proteins of the 50S ribosomal subunit, although it is not seen to bind rRNA by itself. It is important during the early stages of 50S assembly. The chain is Large ribosomal subunit protein uL13 from Rhizobium meliloti (strain 1021) (Ensifer meliloti).